The primary structure comprises 2387 residues: MLPPKSLSATKPKKWAPNLYELDSDLSEPDAVPGEGATDSEFFHQRFRNFLYVEFIGPRKTLLKLRNLCLDWLQPEIRTKEEIIEVLVLEQYLSILPERIKPWVYARKPETCEKLVALLEDYEAMYEPEDDNSSDTHSEGGMSRRAAESPPPRPALPCCSERERRRGRSRDMESRDRWPSVRSPRSRFHQRDLALPLAERAKEREHRRRDSLLDLDARSEEAVLYQDMVALTEDRKPQNPIQDNMENYRKLLSLGVQLAEDDGHSHMTQGHSARSKRSAYPSTSRGLKTAPETKKSAHRRGICEAESSHGVIMEKFIKDVARSSRSGRARESSERPHRLSRRAGGDWKEASFSRREAGASERGPEGGAFGGGGFSCGSDLVSKKRALERKRRYHFDAEGQGPVHDPRGGARKRPFECGGEARRAAKAAGASSLSAPPAAPSQPLDFGAMPYVCDECGRSFAVISEFVEHQIVHTRESLYEYGESFIHSAAVSEAQSRPEGARRSEGAQAAGLAEHRGGQAQEHLRGSGDEEQDEPFLPSPTFSELQKMYGKDKFYECKVCKETFLHSSALIEHQKIHSHEDREKERSTGAVRRTPMLGELQRACGKEKRYECKVCGETFHHSAALREHQKTHGRGSPSEGRARAFEETFIPGQSLKRRQKTYSKEKLYDFREGGDAFGRSSDFMEHQKIHSRKSYFDSRGYEKPLLHSMSMPGSQKSHTITRPPEDEDEEKAFTASSSPEDGQEARGYERSAYERAILHSLAAFRPPRGLREDGEPSTYLSGLRDPPQKTPAWESPYAGGRHSFFRSSVFYRASRPAPLDHLAGEGPSGWQRDGEASGPSSDGRQHQKARAKKKNIERKNYDASMMHSLHFGESQTFRPRERFYECLECGEFFVRSSELAEHQKIHNRKKLSGSKNYLRSVLRSLSSTDPQTSYQGQSVQMSYPQEAAQTSYAELAAQTSYAEEPAQTSYAVEPAQTSYAEEPAQTSYTEAPAEASYTEEPAQTSCIEEPAQTSYTNPAAETSYAEEPAQTSYTEAPAEASYTEEPAQTSCIEEPAQTSYTNPAAETSYTEEPAQTSYTEAPAEASGIEEPAQTNYTEESAEVSYTEEPSQTSCIEEPAQTSYTDPAAETSYTEEPAQTSYTQEPAQTSCTEEPAQTSCTEEPAQTSYTQEPAQTSYTKEPAEASYTEEPAQTSCIEEPAQTNYTKESAKASYTEEPAQTSYTDPAAETSYTEEPAQTNYTVESAEASYTEEPSQTSCIEEPAQTSYTDSAADTSCTEEPAQTSCTEEPAQTSYTQEPAQTSCTEEPAQTSCTEEPAQTSYTQEPAQTSCTEEPAQTSYTQEPAQTSCTEEPAQTSYTEEPAQTSYTEEPAQTSYTQEPAQTSCTEEPAQTSYTEEPAQTSYTEEPAQTSYTQEPAQTSYTEEPAQTSYTEEPAQTSYAQEPAQTSYAEEPAQTSYAEEPAQTSYAEEPAQTSYTQEPAQTNYTEEPAEASYTEEPAQTSYAEEPAQTSYPEEPAQTSYAEEPAQTSYAEEPAQTSYPEEPAQTSYTEEPAQTSYAKEPAQTSYPEEPAQTSYAEEPAQTSYAEEPAQTSYAEEPAQTSYSEEPAQTRYTGNELRSDMRKNQLRPDMPRNQLRPVMPRNQLRPDMPRNQPRPVILRNQLRPDMPRNQPRPVILRNQLRPDMLGNQLRPDMPGNQLRPDMLREPPAETSYAELVAQISYAELVTPTSYAELAAETGYFEPPAQTSYTEPAETNYADPAAQVSFDEPPAEASYADLAAEISYAELAAETSYADLAAQISYDEPPAETSYAELAAQISYSEPADQTSYAELAAQTSYSEPLAQTSYAELTSETSYCEQPVLNECKECGECFATVEDLGRHQKIYAREKFHDGKLFGEPVMQDLGLDGSPEEELEEQEEPEEPEDSIYGCKDCGLGFADRADLRDHQKVHGREYLVDSREYTHPAVHMPPVSEYQKDCLGEQLYECPACGESFVHSSFLFEHQKVHEQDQFYGHRRYEPFMQPLIVSPRRPQAPQKSAPAGVGPQCQVCGQDFIHASVLSEHARGHAGEGLPDQGQGGAGAAGPGPAPTEPQQDPGEEQRYECETCGESFPSQADLQEHMRVHEKGEPYDYGAAFVHTSFLTEPPKRDWPFYECKDCGKSFIHSTILTKHQKLHLQEEGAAAAAAATAQEAEANVLVPREVLRIQGSNVEAAEPEVEAAEPEVEAAEPEVEAAEPLGEAEGPEWEAAEPSGEAEQPHAEAEQPDMDADEPDGAGIEDPEERAEEPEGDDDEPDGAGIEDPEEEGEEQEIQVEEPYYDCGECGETFPSGAAYAEHLTAHASLVILEPAGLYGEGAGGPEGGRPDDELFKCDVCGQLFSDRLSLARHQNTHTG.

Residues 44–126 (HQRFRNFLYV…ALLEDYEAMY (83 aa)) form the SCAN box domain. Disordered regions lie at residues 127–194 (EPED…RDLA), 262–305 (DGHS…ICEA), 321–371 (ARSS…AFGG), and 392–423 (RYHF…EARR). Composition is skewed to basic and acidic residues over residues 160–179 (SERE…DRWP), 291–305 (PETK…ICEA), 321–364 (ARSS…ERGP), and 404–423 (HDPR…EARR). A C2H2-type 1 zinc finger spans residues 451 to 473 (YVCDECGRSFAVISEFVEHQIVH). A disordered region spans residues 492–542 (SEAQSRPEGARRSEGAQAAGLAEHRGGQAQEHLRGSGDEEQDEPFLPSPTF). Residues 513 to 528 (AEHRGGQAQEHLRGSG) show a composition bias toward basic and acidic residues. 2 C2H2-type zinc fingers span residues 555–577 (YECK…QKIH) and 610–632 (YECK…QKTH). The segment at 668–690 (YDFREGGDAFGRSSDFMEHQKIH) adopts a C2H2-type 4; degenerate zinc-finger fold. Disordered regions lie at residues 704-747 (PLLH…EARG), 764-797 (FRPP…ESPY), and 820-858 (DHLA…NIER). Residues 711–720 (MPGSQKSHTI) are compositionally biased toward polar residues. Positions 846–856 (HQKARAKKKNI) are enriched in basic residues. Residues 884–906 (YECLECGEFFVRSSELAEHQKIH) form a C2H2-type 5 zinc finger. Tandem repeats lie at residues 965 to 973 (PAQTSYAVE), 974 to 982 (PAQTSYAEE), 983 to 991 (PAQTSYTEA), 1001 to 1009 (PAQTSCIEE), 1010 to 1018 (PAQTSYTNP), 1028 to 1036 (PAQTSYTEA), 1046 to 1054 (PAQTSCIEE), 1055 to 1063 (PAQTSYTNP), 1073 to 1081 (PAQTSYTEA), 1091 to 1099 (PAQTNYTEE), 1109 to 1117 (PSQTSCIEE), 1118 to 1126 (PAQTSYTDP), 1136 to 1144 (PAQTSYTQE), 1145 to 1153 (PAQTSCTEE), 1154 to 1162 (PAQTSCTEE), 1163 to 1171 (PAQTSYTQE), 1172 to 1180 (PAQTSYTKE), 1190 to 1198 (PAQTSCIEE), 1199 to 1207 (PAQTNYTKE), 1217 to 1225 (PAQTSYTDP), 1235 to 1243 (PAQTNYTVE), 1253 to 1261 (PSQTSCIEE), 1280 to 1288 (PAQTSCTEE), 1289 to 1297 (PAQTSYTQE), 1298 to 1306 (PAQTSCTEE), 1307 to 1315 (PAQTSCTEE), 1316 to 1324 (PAQTSYTQE), 1325 to 1333 (PAQTSCTEE), 1334 to 1342 (PAQTSYTQE), 1343 to 1351 (PAQTSCTEE), 1352 to 1360 (PAQTSYTEE), 1361 to 1369 (PAQTSYTEE), 1370 to 1378 (PAQTSYTQE), 1379 to 1387 (PAQTSCTEE), 1388 to 1396 (PAQTSYTEE), 1397 to 1405 (PAQTSYTEE), 1406 to 1414 (PAQTSYTQE), 1415 to 1423 (PAQTSYTEE), 1424 to 1432 (PAQTSYTEE), 1433 to 1441 (PAQTSYAQE), 1442 to 1450 (PAQTSYAEE), 1451 to 1459 (PAQTSYAEE), 1460 to 1468 (PAQTSYAEE), 1469 to 1477 (PAQTSYTQE), 1478 to 1486 (PAQTNYTEE), 1496 to 1504 (PAQTSYAEE), 1505 to 1513 (PAQTSYPEE), 1514 to 1522 (PAQTSYAEE), 1523 to 1531 (PAQTSYAEE), 1532 to 1540 (PAQTSYPEE), 1541 to 1549 (PAQTSYTEE), 1550 to 1558 (PAQTSYAKE), 1559 to 1567 (PAQTSYPEE), 1568 to 1576 (PAQTSYAEE), 1577 to 1585 (PAQTSYAEE), 1586 to 1594 (PAQTSYAEE), and 1595 to 1603 (PAQTSYSEE). Polar residues-rich tracts occupy residues 965 to 989 (PAQT…TSYT) and 1001 to 1020 (PAQT…NPAA). The interval 965–1603 (PAQTSYAVEP…EPAQTSYSEE (639 aa)) is 37 X 9 AA repeat of P-A-Q-T-X-Y-X-X-E. The disordered stretch occupies residues 965-1651 (PAQTSYAVEP…RPDMPRNQPR (687 aa)). Residues 1046 to 1079 (PAQTSCIEEPAQTSYTNPAAETSYTEEPAQTSYT) are compositionally biased toward polar residues. Polar residues-rich tracts occupy residues 1107–1178 (EEPS…TSYT), 1190–1206 (PAQT…NYTK), 1217–1242 (PAQT…NYTV), 1251–1484 (EEPS…TNYT), and 1496–1601 (PAQT…TSYS). The C2H2-type 6; degenerate zinc finger occupies 1859 to 1881 (NECKECGECFATVEDLGRHQKIY). Residues 1900–1921 (LGLDGSPEEELEEQEEPEEPED) form a disordered region. The segment covering 1905-1921 (SPEEELEEQEEPEEPED) has biased composition (acidic residues). 5 consecutive C2H2-type zinc fingers follow at residues 1924–1946 (YGCK…QKVH), 1980–2002 (YECP…QKVH), 2040–2062 (PQCQ…ARGH), 2097–2119 (YECE…MRVH), and 2148–2170 (YECK…QKLH). Residues 2059 to 2102 (ARGHAGEGLPDQGQGGAGAAGPGPAPTEPQQDPGEEQRYECETC) form a disordered region. The segment at 2204-2322 (NVEAAEPEVE…DCGECGETFP (119 aa)) is disordered. 2 stretches are compositionally biased toward acidic residues: residues 2208–2228 (AEPE…EVEA) and 2257–2311 (EQPD…EEPY). 2 C2H2-type zinc fingers span residues 2312–2334 (YDCG…LTAH) and 2363–2385 (FKCD…QNTH).

The protein belongs to the krueppel C2H2-type zinc-finger protein family. In terms of assembly, homodimer. Interacts with SIAH1A and SIAH2. Interacts with TRAF2. In terms of tissue distribution, expressed at high levels in the cerebellum and at moderate levels in the testis and ovary.

It localises to the nucleus. It is found in the cytoplasm. Its function is as follows. Induces apoptosis in cooperation with SIAH1A. Acts as a mediator between p53/TP53 and BAX in a neuronal death pathway that is activated by DNA damage. Acts synergistically with TRAF2 and inhibits TNF induced apoptosis through activation of NF-kappa-B. This Bos taurus (Bovine) protein is Paternally-expressed gene 3 protein (PEG3).